Reading from the N-terminus, the 195-residue chain is Imidazoleglycerol-phosphate dehydratase (195 aa).

The protein belongs to the imidazoleglycerol-phosphate dehydratase family.

It localises to the cytoplasm. It carries out the reaction D-erythro-1-(imidazol-4-yl)glycerol 3-phosphate = 3-(imidazol-4-yl)-2-oxopropyl phosphate + H2O. It functions in the pathway amino-acid biosynthesis; L-histidine biosynthesis; L-histidine from 5-phospho-alpha-D-ribose 1-diphosphate: step 6/9. The sequence is that of Imidazoleglycerol-phosphate dehydratase from Trichlorobacter lovleyi (strain ATCC BAA-1151 / DSM 17278 / SZ) (Geobacter lovleyi).